The sequence spans 248 residues: Triosephosphate isomerase (248 aa).

9–11 (NWK) serves as a coordination point for substrate. Residue histidine 94 is the Electrophile of the active site. Residue glutamate 166 is the Proton acceptor of the active site. Substrate is bound by residues glycine 172, serine 211, and 232–233 (GG).

Belongs to the triosephosphate isomerase family. Homodimer.

It is found in the cytoplasm. The catalysed reaction is D-glyceraldehyde 3-phosphate = dihydroxyacetone phosphate. It functions in the pathway carbohydrate biosynthesis; gluconeogenesis. The protein operates within carbohydrate degradation; glycolysis; D-glyceraldehyde 3-phosphate from glycerone phosphate: step 1/1. Functionally, involved in the gluconeogenesis. Catalyzes stereospecifically the conversion of dihydroxyacetone phosphate (DHAP) to D-glyceraldehyde-3-phosphate (G3P). The protein is Triosephosphate isomerase of Vesicomyosocius okutanii subsp. Calyptogena okutanii (strain HA).